We begin with the raw amino-acid sequence, 510 residues long: MAGSRRRGLQARVRPLFCALLLSLSRFVGGDGVGGDPAAGLPHRRFEYKYSFKGPHLVQSDGTVPFWAHAGNAIPSSDQIRVAPSLKSQRGSVWTKAKAAFENWEVEVTFRVTGRGRIGADGLAIWYTENQGLEGPVFGSADLWNGVGIFFDSFDNDGKKNNPAIVIIGNNGQIHYDHQNDGASQALASCQRDFRNKPYPVRAKIIYYQKTLTVMINNGFTPDKNDYEFCAKVENMIIPAQGHFGVSAATGGLADDHDVLSFLTFQLTEPGKEPPTPDKEISEKEKEKYQEEFEHFQQELDKKKEEFQKGHPDLQGQPAEEIFESVGDRELRQVFEGQNRIHLEIKQLNRQLDMILDEQRRYVSSLTEEISKRGAGMPGQHGQISQQELDTVVKTQHEILRQVNEMKNSMSETVRLVSGMQHPGSAGGVYETAQHFADIKEHLHTVKRDIDNLVQRHMLSNEKPKCPELPPFPSCLSTVHFIIFVVVQTVLFIGYIMYRSQQEAAAKKFF.

A signal peptide spans 1 to 30 (MAGSRRRGLQARVRPLFCALLLSLSRFVGG). Topologically, residues 31-477 (DGVGGDPAAG…ELPPFPSCLS (447 aa)) are lumenal. An L-type lectin-like domain is found at 44–267 (RRFEYKYSFK…DVLSFLTFQL (224 aa)). Residues Ser-88 and Asp-121 each coordinate a carbohydrate. Residues Asp-152, Phe-154, and Asn-156 each coordinate Ca(2+). 2 residues coordinate a carbohydrate: Asn-156 and His-178. Asp-181 lines the Ca(2+) pocket. A disulfide bridge links Cys-190 with Cys-230. Residue 251 to 253 (GGL) participates in a carbohydrate binding. The residue at position 425 (Ser-425) is a Phosphoserine. A helical membrane pass occupies residues 478–498 (TVHFIIFVVVQTVLFIGYIMY). Residues 499–510 (RSQQEAAAKKFF) lie on the Cytoplasmic side of the membrane. Positions 499-510 (RSQQEAAAKKFF) are mediates interaction with RAB3GAP1, RAB3GAP2 and UBXN6. Positions 509 to 510 (FF) match the ER export motif motif.

As to quaternary structure, exists both as a covalent disulfide-linked homohexamer, and a complex of three disulfide-linked dimers non-covalently kept together. Interacts with MCFD2. May interact with TMEM115. Interacts with RAB3GAP1 and RAB3GAP2. Interacts with UBXN6. Interacts with SERPINA1/alpha1-antitrypsin. Interacts with BET1.

It is found in the endoplasmic reticulum-Golgi intermediate compartment membrane. Its subcellular location is the golgi apparatus membrane. The protein localises to the endoplasmic reticulum membrane. In terms of biological role, mannose-specific lectin. May recognize sugar residues of glycoproteins, glycolipids, or glycosylphosphatidyl inositol anchors and may be involved in the sorting or recycling of proteins, lipids, or both. The LMAN1-MCFD2 complex forms a specific cargo receptor for the ER-to-Golgi transport of selected proteins. This is Protein ERGIC-53 (LMAN1) from Chlorocebus aethiops (Green monkey).